The sequence spans 228 residues: Lipoprotein-releasing system ATP-binding protein LolD (228 aa).

Residues Leu6–Val227 enclose the ABC transporter domain. An ATP-binding site is contributed by Gly42 to Ser49.

The protein belongs to the ABC transporter superfamily. Lipoprotein translocase (TC 3.A.1.125) family. The complex is composed of two ATP-binding proteins (LolD) and two transmembrane proteins (LolC and LolE).

It is found in the cell inner membrane. In terms of biological role, part of the ABC transporter complex LolCDE involved in the translocation of mature outer membrane-directed lipoproteins, from the inner membrane to the periplasmic chaperone, LolA. Responsible for the formation of the LolA-lipoprotein complex in an ATP-dependent manner. This Hyphomonas neptunium (strain ATCC 15444) protein is Lipoprotein-releasing system ATP-binding protein LolD.